The primary structure comprises 145 residues: Large ribosomal subunit protein uL13 (145 aa).

Belongs to the universal ribosomal protein uL13 family. As to quaternary structure, part of the 50S ribosomal subunit.

In terms of biological role, this protein is one of the early assembly proteins of the 50S ribosomal subunit, although it is not seen to bind rRNA by itself. It is important during the early stages of 50S assembly. The sequence is that of Large ribosomal subunit protein uL13 from Exiguobacterium sibiricum (strain DSM 17290 / CCUG 55495 / CIP 109462 / JCM 13490 / 255-15).